We begin with the raw amino-acid sequence, 395 residues long: Phosphoglycerate kinase (395 aa).

Residues 20–22, R36, 59–62, R120, and R157 contribute to the substrate site; these read DFN and HLGR. ATP contacts are provided by residues K208, G296, E327, and 353–356; that span reads GGDT.

Belongs to the phosphoglycerate kinase family. In terms of assembly, monomer.

The protein resides in the cytoplasm. The catalysed reaction is (2R)-3-phosphoglycerate + ATP = (2R)-3-phospho-glyceroyl phosphate + ADP. It functions in the pathway carbohydrate degradation; glycolysis; pyruvate from D-glyceraldehyde 3-phosphate: step 2/5. This is Phosphoglycerate kinase from Tropheryma whipplei (strain Twist) (Whipple's bacillus).